The following is a 309-amino-acid chain: Type II methyltransferase M.HindIII (309 aa).

It belongs to the N(4)/N(6)-methyltransferase family.

The catalysed reaction is a 2'-deoxyadenosine in DNA + S-adenosyl-L-methionine = an N(6)-methyl-2'-deoxyadenosine in DNA + S-adenosyl-L-homocysteine + H(+). Functionally, a beta subtype methylase that recognizes the double-stranded sequence 5'-AAGCTT-3', methylates A-1 on both strands, and protects the DNA from cleavage by the HindIII endonuclease. This is Type II methyltransferase M.HindIII from Haemophilus influenzae (strain ATCC 51907 / DSM 11121 / KW20 / Rd).